The primary structure comprises 440 residues: Tryptophan aminotransferase-related protein 2 (440 aa).

Residues 7–26 (FLSWRNMLVLSLAINFSLIL) form a helical membrane-spanning segment. Residues Tyr-112, 154–155 (ST), Asn-222, 242–245 (DLAY), 265–268 (TASK), and Arg-276 each bind pyridoxal 5'-phosphate. Lys-268 carries the post-translational modification N6-(pyridoxal phosphate)lysine.

This sequence belongs to the alliinase family. It depends on pyridoxal 5'-phosphate as a cofactor. As to expression, expressed in roots, cotyledons and in the apical parts of hypocotyls. In roots, restricted to the provasculature of meristematic regions. Detected on the inner side of the apical hooks.

The protein resides in the membrane. It carries out the reaction L-tryptophan + 2-oxoglutarate = indole-3-pyruvate + L-glutamate. The catalysed reaction is L-tryptophan + pyruvate = indole-3-pyruvate + L-alanine. The protein operates within plant hormone metabolism; auxin biosynthesis. Its activity is regulated as follows. Inhibited by L-kynurenine. Involved in auxin production. Both TAA1 and TAR2 are required for maintaining proper auxin levels in roots, while TAA1, TAR1 and TAR2 are required for proper embryo patterning. Involved in the maintenance of the root stem cell niches. The chain is Tryptophan aminotransferase-related protein 2 (TAR2) from Arabidopsis thaliana (Mouse-ear cress).